Consider the following 276-residue polypeptide: Shikimate dehydrogenase (NADP(+)) (276 aa).

Residues 20–22 (SRS) and T67 contribute to the shikimate site. The active-site Proton acceptor is K71. Residue D83 coordinates NADP(+). Positions 92 and 107 each coordinate shikimate. NADP(+) is bound by residues 131-135 (GAGGA) and I217. Y219 serves as a coordination point for shikimate. NADP(+) is bound at residue G240.

This sequence belongs to the shikimate dehydrogenase family. Homodimer.

It carries out the reaction shikimate + NADP(+) = 3-dehydroshikimate + NADPH + H(+). It functions in the pathway metabolic intermediate biosynthesis; chorismate biosynthesis; chorismate from D-erythrose 4-phosphate and phosphoenolpyruvate: step 4/7. Functionally, involved in the biosynthesis of the chorismate, which leads to the biosynthesis of aromatic amino acids. Catalyzes the reversible NADPH linked reduction of 3-dehydroshikimate (DHSA) to yield shikimate (SA). This is Shikimate dehydrogenase (NADP(+)) from Acidiphilium cryptum (strain JF-5).